A 480-amino-acid chain; its full sequence is Uridine 5'-monophosphate synthase (480 aa).

Ala-2 carries the N-acetylalanine modification. The OPRTase stretch occupies residues 2–214 (AVARAALGPL…VFVAANHNGS (213 aa)). At Tyr-37 the chain carries Phosphotyrosine. A Phosphoserine modification is found at Ser-214. Residues 215–220 (PLSIKE) are domain linker. An OMPdecase region spans residues 221–480 (APKELSFGAR…WEAYLSRLGV (260 aa)). An orotidine 5'-phosphate-binding site is contributed by Ser-257. Residues Ser-257, Asp-259, and 281–283 (KTH) contribute to the UMP site. Lys-281 lines the orotidine 5'-phosphate pocket. Catalysis depends on for OMPdecase activity residues Asp-312, Lys-314, and Asp-317. Orotidine 5'-phosphate contacts are provided by residues Lys-314, Asp-317, Thr-321, Ser-372, 430–432 (QQY), and 450–451 (GR). UMP-binding positions include Asp-317, Thr-321, Ser-372, 430–432 (QQY), and 450–451 (GR).

In the N-terminal section; belongs to the purine/pyrimidine phosphoribosyltransferase family. The protein in the C-terminal section; belongs to the OMP decarboxylase family. Homodimer; dimerization is required for enzymatic activity.

It carries out the reaction orotidine 5'-phosphate + diphosphate = orotate + 5-phospho-alpha-D-ribose 1-diphosphate. It catalyses the reaction orotidine 5'-phosphate + H(+) = UMP + CO2. Its pathway is pyrimidine metabolism; UMP biosynthesis via de novo pathway; UMP from orotate: step 1/2. The protein operates within pyrimidine metabolism; UMP biosynthesis via de novo pathway; UMP from orotate: step 2/2. Functionally, bifunctional enzyme catalyzing the last two steps of de novo pyrimidine biosynthesis, orotate phosphoribosyltransferase (OPRT), which converts orotate to orotidine-5'-monophosphate (OMP), and orotidine-5'-monophosphate decarboxylase (ODC), the terminal enzymatic reaction that decarboxylates OMP to uridine monophosphate (UMP). The chain is Uridine 5'-monophosphate synthase from Homo sapiens (Human).